We begin with the raw amino-acid sequence, 538 residues long: Chaperonin GroEL (538 aa).

ATP is bound by residues Thr-29–Pro-32, Asp-86–Thr-90, Gly-413, Asp-479–Leu-481, and Asp-495.

This sequence belongs to the chaperonin (HSP60) family. As to quaternary structure, forms a cylinder of 14 subunits composed of two heptameric rings stacked back-to-back. Interacts with the co-chaperonin GroES.

The protein resides in the cytoplasm. It catalyses the reaction ATP + H2O + a folded polypeptide = ADP + phosphate + an unfolded polypeptide.. Together with its co-chaperonin GroES, plays an essential role in assisting protein folding. The GroEL-GroES system forms a nano-cage that allows encapsulation of the non-native substrate proteins and provides a physical environment optimized to promote and accelerate protein folding. This is Chaperonin GroEL from Thermotoga neapolitana.